The following is a 556-amino-acid chain: Membrane protein insertase YidC (556 aa).

5 helical membrane passes run 6 to 26 (IVLY…WQID), 332 to 352 (LDLT…FSLM), 358 to 378 (VVGN…LAFY), 428 to 448 (LGGC…YWVL), and 501 to 521 (VMMF…SGLV).

It belongs to the OXA1/ALB3/YidC family. Type 1 subfamily. Interacts with the Sec translocase complex via SecD. Specifically interacts with transmembrane segments of nascent integral membrane proteins during membrane integration.

The protein resides in the cell inner membrane. Functionally, required for the insertion and/or proper folding and/or complex formation of integral membrane proteins into the membrane. Involved in integration of membrane proteins that insert both dependently and independently of the Sec translocase complex, as well as at least some lipoproteins. Aids folding of multispanning membrane proteins. The polypeptide is Membrane protein insertase YidC (Legionella pneumophila (strain Lens)).